We begin with the raw amino-acid sequence, 443 residues long: Putative phosphoribosyl transferase MT0597 (443 aa).

In the N-terminal section; belongs to the purine/pyrimidine phosphoribosyltransferase family. The protein in the C-terminal section; belongs to the dienelactone hydrolase family.

This is Putative phosphoribosyl transferase MT0597 from Mycobacterium tuberculosis (strain CDC 1551 / Oshkosh).